We begin with the raw amino-acid sequence, 90 residues long: Large ribosomal subunit protein bL27 (90 aa).

The tract at residues 1–20 (MAHKKAGGSSRNGRDSAGKR) is disordered.

It belongs to the bacterial ribosomal protein bL27 family.

In Nitrobacter hamburgensis (strain DSM 10229 / NCIMB 13809 / X14), this protein is Large ribosomal subunit protein bL27.